We begin with the raw amino-acid sequence, 500 residues long: Sulfate adenylyltransferase (500 aa).

An N-terminal region spans residues 1–165 (MLSPHGGILQ…LEAIQLPAHY (165 aa)). Residues 166-390 (DYLNLRKSPA…LRQYNPPRYR (225 aa)) are catalytic. Q193 is a sulfate binding site. ATP is bound by residues 193 to 196 (QTRN) and 287 to 290 (GRDH). Residues T194, R195, and N196 contribute to the active site. Position 195 (R195) interacts with sulfate. A291 lines the sulfate pocket. Position 329 (I329) interacts with ATP. The interval 391-500 (QGFVIVVNHE…FLEDNKFFQF (110 aa)) is required for oligomerization; adenylyl-sulfate kinase-like.

It belongs to the sulfate adenylyltransferase family. Homohexamer. Dimer of trimers.

The protein localises to the cytoplasm. The enzyme catalyses sulfate + ATP + H(+) = adenosine 5'-phosphosulfate + diphosphate. The protein operates within sulfur metabolism; hydrogen sulfide biosynthesis; sulfite from sulfate: step 1/3. Functionally, catalyzes the first intracellular reaction of sulfate assimilation, forming adenosine-5'-phosphosulfate (APS) from inorganic sulfate and ATP. Plays an important role in sulfate activation as a component of the biosynthesis pathway of sulfur-containing amino acids. This chain is Sulfate adenylyltransferase, found in Eremothecium gossypii (strain ATCC 10895 / CBS 109.51 / FGSC 9923 / NRRL Y-1056) (Yeast).